Reading from the N-terminus, the 236-residue chain is 15,16-dihydrobiliverdin:ferredoxin oxidoreductase (236 aa).

Belongs to the HY2 family.

It carries out the reaction 15,16-dihydrobiliverdin + oxidized 2[4Fe-4S]-[ferredoxin] = biliverdin IXalpha + reduced 2[4Fe-4S]-[ferredoxin] + 2 H(+). Catalyzes the two-electron reduction of biliverdin IX-alpha at the C15 methine bridge. In Synechococcus sp. (strain WH8020), this protein is 15,16-dihydrobiliverdin:ferredoxin oxidoreductase (pebA).